Here is a 269-residue protein sequence, read N- to C-terminus: Cytochrome c oxidase subunit 3 (269 aa).

A run of 7 helical transmembrane segments spans residues 24-44 (LFTS…MHGF), 46-66 (GFQY…GLWF), 90-110 (GVGL…WAFF), 138-160 (PLLN…HSLI), 167-187 (ALYG…FQGV), 207-227 (FGTG…AVGL), and 247-267 (ILYW…VYYW).

The protein belongs to the cytochrome c oxidase subunit 3 family. Component of the cytochrome c oxidase (complex IV, CIV), a multisubunit enzyme composed of a catalytic core of 3 subunits and several supernumerary subunits. The complex exists as a monomer or a dimer and forms supercomplexes (SCs) in the inner mitochondrial membrane with ubiquinol-cytochrome c oxidoreductase (cytochrome b-c1 complex, complex III, CIII).

It localises to the mitochondrion inner membrane. It catalyses the reaction 4 Fe(II)-[cytochrome c] + O2 + 8 H(+)(in) = 4 Fe(III)-[cytochrome c] + 2 H2O + 4 H(+)(out). In terms of biological role, component of the cytochrome c oxidase, the last enzyme in the mitochondrial electron transport chain which drives oxidative phosphorylation. The respiratory chain contains 3 multisubunit complexes succinate dehydrogenase (complex II, CII), ubiquinol-cytochrome c oxidoreductase (cytochrome b-c1 complex, complex III, CIII) and cytochrome c oxidase (complex IV, CIV), that cooperate to transfer electrons derived from NADH and succinate to molecular oxygen, creating an electrochemical gradient over the inner membrane that drives transmembrane transport and the ATP synthase. Cytochrome c oxidase is the component of the respiratory chain that catalyzes the reduction of oxygen to water. Electrons originating from reduced cytochrome c in the intermembrane space (IMS) are transferred via the dinuclear copper A center (CU(A)) of subunit 2 and heme A of subunit 1 to the active site in subunit 1, a binuclear center (BNC) formed by heme A3 and copper B (CU(B)). The BNC reduces molecular oxygen to 2 water molecules using 4 electrons from cytochrome c in the IMS and 4 protons from the mitochondrial matrix. The protein is Cytochrome c oxidase subunit 3 (cox3) of Emericella nidulans (Aspergillus nidulans).